The following is a 222-amino-acid chain: Ras-related protein Rab-41 (222 aa).

GTP is bound by residues serine 41, valine 42, glycine 43, lysine 44, threonine 45, serine 46, and threonine 63. Position 45 (threonine 45) interacts with Mg(2+). The segment at 58-66 (CACQATVGI) is switch-I. Threonine 63 and aspartate 86 together coordinate Mg(2+). GTP is bound by residues glycine 89, asparagine 144, lysine 145, aspartate 147, serine 174, alanine 175, and lysine 176. The switch-II stretch occupies residues 89-105 (GQERFHSLIPSYIRDST). Cysteine 222 carries S-geranylgeranyl cysteine lipidation.

It belongs to the small GTPase superfamily. Rab family. Mg(2+) is required as a cofactor. In terms of tissue distribution, widely expressed in brain, testis, lung, heart, ovary, colon, kidney, uterus and spleen but not in liver.

The protein localises to the cytoplasm. The catalysed reaction is GTP + H2O = GDP + phosphate + H(+). Its activity is regulated as follows. Regulated by guanine nucleotide exchange factors (GEFs) which promote the exchange of bound GDP for free GTP. Regulated by GTPase activating proteins (GAPs) which increase the GTP hydrolysis activity. Inhibited by GDP dissociation inhibitors (GDIs). Its function is as follows. The small GTPases Rab are key regulators of intracellular membrane trafficking, from the formation of transport vesicles to their fusion with membranes. Rabs cycle between an inactive GDP-bound form and an active GTP-bound form that is able to recruit to membranes different sets of downstream effectors directly responsible for vesicle formation, movement, tethering and fusion. RAB41 is required for normal Golgi ribbon organization and ER-to-Golgi trafficking. This Homo sapiens (Human) protein is Ras-related protein Rab-41.